Consider the following 514-residue polypeptide: Tryptophan decarboxylase 1 (514 aa).

Phe-104 is a serotonin binding site. Positions 175 and 176 each coordinate pyridoxal 5'-phosphate. His-214 lines the serotonin pocket. Thr-273 contacts pyridoxal 5'-phosphate. Lys-330 is subject to N6-(pyridoxal phosphate)lysine. Tyr-359 acts as the Proton donor in catalysis. The pyridoxal 5'-phosphate site is built by Val-380 and Gly-381.

This sequence belongs to the group II decarboxylase family. As to quaternary structure, forms homodimers. The cofactor is pyridoxal 5'-phosphate.

It carries out the reaction L-tryptophan + H(+) = tryptamine + CO2. It catalyses the reaction 5-hydroxy-L-tryptophan + H(+) = serotonin + CO2. Its function is as follows. Involved in serotonin biosynthesis. Catalyzes the decarboxylation of L-tryptophan to produce tryptamine, which is converted to serotonin by tryptamine 5-hydroxylase. May play a major role in serotonin biosynthesis during senescence. Accumulation of serotonin attenuates leaf senescence. Catalyzes the decarboxylation of 5-hydroxy-L-tryptophan to produce serotonin. The protein is Tryptophan decarboxylase 1 of Oryza sativa subsp. japonica (Rice).